The sequence spans 163 residues: Nucleotide-binding protein RHA1_ro01989 (163 aa).

The protein belongs to the YajQ family.

Nucleotide-binding protein. The polypeptide is Nucleotide-binding protein RHA1_ro01989 (Rhodococcus jostii (strain RHA1)).